The chain runs to 434 residues: MSNFSPREIVSELDRFIIGQKDAKRAVAIALRNRWRRQQLEGQMREEVMPKNILMIGPTGVGKTEISRRLAKLAGAPFVKVEATKFTEVGYVGRDVEQIIRDLVEIAIALVREKRREDVKAKAHLNAEERVLDALVGKTASPVTRDSFRKKLRNGEMDDKEIEIEVSDSGASPNFEIPGMPGANIGVLNISDMLGKAMGGRTKTRKTTVKDSYPILINDESDKLLDQDQIVQEALRVSEDEGIVFIDEIDKIAAREGGSGAGVSREGVQRDLLPLVEGTTVATKYGPVKTDHILFITSGAFHVSKPSDLLPELQGRLPIRVELSALTREDFRRILTETEASLIKQYIALMETEEVKLEFSDDAIDALADIAVDLNATVENIGARRLQTVMEKVLDEISFTAPDKAGATFIIDAAYVKEKIGGLAKNTDLSRFIL.

Residues Ile18, 60–65, Asp247, Glu312, and Arg384 each bind ATP; that span reads GVGKTE.

The protein belongs to the ClpX chaperone family. HslU subfamily. A double ring-shaped homohexamer of HslV is capped on each side by a ring-shaped HslU homohexamer. The assembly of the HslU/HslV complex is dependent on binding of ATP.

Its subcellular location is the cytoplasm. In terms of biological role, ATPase subunit of a proteasome-like degradation complex; this subunit has chaperone activity. The binding of ATP and its subsequent hydrolysis by HslU are essential for unfolding of protein substrates subsequently hydrolyzed by HslV. HslU recognizes the N-terminal part of its protein substrates and unfolds these before they are guided to HslV for hydrolysis. The sequence is that of ATP-dependent protease ATPase subunit HslU from Brucella melitensis biotype 2 (strain ATCC 23457).